The sequence spans 842 residues: GPI ethanolamine phosphate transferase 2 (842 aa).

N-linked (GlcNAc...) asparagine glycosylation occurs at asparagine 186. A helical membrane pass occupies residues 409–429; it reads YNYPLLFIGCFLSIVITGTIY. Residue asparagine 441 is glycosylated (N-linked (GlcNAc...) asparagine). Transmembrane regions (helical) follow at residues 442–462 and 468–488; these read TSIL…SSFI and FWWW…NFSS. N-linked (GlcNAc...) asparagine glycosylation is present at asparagine 506. The helical transmembrane segment at 524 to 544 threads the bilayer; it reads GNIDALWWLNLITVTVVGLNL. Asparagine 551 carries an N-linked (GlcNAc...) asparagine glycan. Residues 554–574 traverse the membrane as a helical segment; sequence VSLLGFSDLLSMGLLSMITFL. Residue asparagine 578 is glycosylated (N-linked (GlcNAc...) asparagine). Transmembrane regions (helical) follow at residues 615-635, 698-718, and 740-760; these read IHTA…AVLV, YLLA…QSGG, and IYVV…YWSF. Asparagine 771 carries an N-linked (GlcNAc...) asparagine glycan. 2 consecutive transmembrane segments (helical) span residues 783–803 and 821–841; these read YPFI…CIIL and MVWT…LLLL.

The protein belongs to the PIGG/PIGN/PIGO family. PIGG subfamily.

It is found in the endoplasmic reticulum membrane. Its pathway is glycolipid biosynthesis; glycosylphosphatidylinositol-anchor biosynthesis. Ethanolamine phosphate transferase involved in glycosylphosphatidylinositol-anchor biosynthesis. Transfers ethanolamine phosphate to the GPI second mannose. The protein is GPI ethanolamine phosphate transferase 2 (LAS21) of Candida glabrata (strain ATCC 2001 / BCRC 20586 / JCM 3761 / NBRC 0622 / NRRL Y-65 / CBS 138) (Yeast).